Consider the following 631-residue polypeptide: Polyadenylate-binding protein, cytoplasmic and nuclear (631 aa).

The interval 1-56 (MSDLQESLEKLSINEKAPQAPADDATPSNTTTLEKESSESAAAAAGEGAGEEGEEA) is disordered. RRM domains are found at residues 58 to 136 (ASLY…WSQR), 146 to 223 (GNIF…KHVS), 239 to 316 (TNVY…RAQK), and 342 to 419 (VNLF…LAQR). The interval 518-545 (GGEFNGPNGQRQQRGAYPPNRNQKGGRP) is disordered. One can recognise a PABC domain in the interval 545-626 (PQRDLAAIIS…ALTAFEEYKK (82 aa)).

Belongs to the polyadenylate-binding protein type-1 family.

Its subcellular location is the cytoplasm. It localises to the nucleus. Its function is as follows. Binds the poly(A) tail of mRNA. Appears to be an important mediator of the multiple roles of the poly(A) tail in mRNA biogenesis, stability and translation. In the nucleus, involved in both mRNA cleavage and polyadenylation. Is also required for efficient mRNA export to the cytoplasm. Acts in concert with a poly(A)-specific nuclease (PAN) to affect poly(A) tail shortening, which may occur concomitantly with either nucleocytoplasmic mRNA transport or translational initiation. In the cytoplasm, stimulates translation initiation and regulates mRNA decay through translation termination-coupled poly(A) shortening, probably mediated by PAN. This is Polyadenylate-binding protein, cytoplasmic and nuclear (PAB1) from Meyerozyma guilliermondii (strain ATCC 6260 / CBS 566 / DSM 6381 / JCM 1539 / NBRC 10279 / NRRL Y-324) (Yeast).